A 142-amino-acid polypeptide reads, in one-letter code: Small ribosomal subunit protein uS12 (142 aa).

The protein belongs to the universal ribosomal protein uS12 family. Part of the 30S ribosomal subunit.

Functionally, with S4 and S5 plays an important role in translational accuracy. Located at the interface of the 30S and 50S subunits. The chain is Small ribosomal subunit protein uS12 from Methanoregula boonei (strain DSM 21154 / JCM 14090 / 6A8).